The sequence spans 329 residues: Cardiolipin synthase (CMP-forming) (329 aa).

The transit peptide at 1 to 34 directs the protein to the mitochondrion; sequence MPPSVATHASLLLKAAAAAAHLHPKPFFSPRAAP. Residues 27–55 are disordered; it reads FFSPRAAPPRIPSAPAPPAAGGSRYRPTT. Residues 32 to 44 are compositionally biased toward pro residues; sequence AAPPRIPSAPAPP. A run of 5 helical transmembrane segments spans residues 134–154, 156–176, 194–214, 228–248, and 298–318; these read LLTLPTVLTIGRVAAVPLLIS, FYMEGPWAATATTGIFLAAAV, FGAFLDPVADKLMVAATLVLL, PWLLTVPAIAIIGREITMSAV, and VTSGIALLYVSAGLAIWSLVV. At 319–329 the chain is on the mitochondrial intermembrane side; the sequence is YMRKIWRILLK.

It belongs to the CDP-alcohol phosphatidyltransferase class-I family. The cofactor is Mn(2+).

Its subcellular location is the mitochondrion inner membrane. It catalyses the reaction a CDP-1,2-diacyl-sn-glycerol + a 1,2-diacyl-sn-glycero-3-phospho-(1'-sn-glycerol) = a cardiolipin + CMP + H(+). In terms of biological role, catalyzes the synthesis of cardiolipin (CL) (diphosphatidylglycerol) by specifically transferring a phosphatidyl group from CDP-diacylglycerol to phosphatidylglycerol (PG). CL is a key phospholipid in mitochondrial membranes and plays important roles in maintaining the functional integrity and dynamics of mitochondria under both optimal and stress conditions. The chain is Cardiolipin synthase (CMP-forming) from Oryza sativa subsp. japonica (Rice).